The following is a 551-amino-acid chain: CTP synthase (551 aa).

The segment at 1 to 265 is amidoligase domain; the sequence is MTRYLFITGG…DHIVAEKWGL (265 aa). Ser-13 provides a ligand contact to CTP. A UTP-binding site is contributed by Ser-13. Residues 14–19 and Asp-71 contribute to the ATP site; that span reads SLGKGI. Asp-71 and Glu-139 together coordinate Mg(2+). CTP-binding positions include 146–148, 186–191, and Lys-222; these read DIE and KTKPTQ. UTP-binding positions include 186–191 and Lys-222; that span reads KTKPTQ. Residues 290–541 form the Glutamine amidotransferase type-1 domain; that stretch reads TVAMVGKYVD…LRAAIAHRDG (252 aa). Gly-351 is an L-glutamine binding site. Cys-378 acts as the Nucleophile; for glutamine hydrolysis in catalysis. L-glutamine is bound by residues 379–382, Glu-402, and Arg-469; that span reads LGMQ. Residues His-514 and Glu-516 contribute to the active site.

It belongs to the CTP synthase family. In terms of assembly, homotetramer.

It carries out the reaction UTP + L-glutamine + ATP + H2O = CTP + L-glutamate + ADP + phosphate + 2 H(+). The catalysed reaction is L-glutamine + H2O = L-glutamate + NH4(+). It catalyses the reaction UTP + NH4(+) + ATP = CTP + ADP + phosphate + 2 H(+). Its pathway is pyrimidine metabolism; CTP biosynthesis via de novo pathway; CTP from UDP: step 2/2. Its activity is regulated as follows. Allosterically activated by GTP, when glutamine is the substrate; GTP has no effect on the reaction when ammonia is the substrate. The allosteric effector GTP functions by stabilizing the protein conformation that binds the tetrahedral intermediate(s) formed during glutamine hydrolysis. Inhibited by the product CTP, via allosteric rather than competitive inhibition. In terms of biological role, catalyzes the ATP-dependent amination of UTP to CTP with either L-glutamine or ammonia as the source of nitrogen. Regulates intracellular CTP levels through interactions with the four ribonucleotide triphosphates. In Halorhodospira halophila (strain DSM 244 / SL1) (Ectothiorhodospira halophila (strain DSM 244 / SL1)), this protein is CTP synthase.